A 349-amino-acid polypeptide reads, in one-letter code: uncharacterized protein (349 aa).

This is an uncharacterized protein from Archaeoglobus fulgidus (strain ATCC 49558 / DSM 4304 / JCM 9628 / NBRC 100126 / VC-16).